A 495-amino-acid polypeptide reads, in one-letter code: Cobyric acid synthase (495 aa).

The 188-residue stretch at 252–439 (RIRIAAPMLS…VHGLFAQDAF (188 aa)) folds into the GATase cobBQ-type domain. The Nucleophile role is filled by Cys334. Residue His431 is part of the active site.

The protein belongs to the CobB/CobQ family. CobQ subfamily.

Its pathway is cofactor biosynthesis; adenosylcobalamin biosynthesis. Its function is as follows. Catalyzes amidations at positions B, D, E, and G on adenosylcobyrinic A,C-diamide. NH(2) groups are provided by glutamine, and one molecule of ATP is hydrogenolyzed for each amidation. The polypeptide is Cobyric acid synthase (Hyphomonas neptunium (strain ATCC 15444)).